A 104-amino-acid polypeptide reads, in one-letter code: N(4)-acetylcytidine amidohydrolase (104 aa).

The ASCH domain maps to 7 to 93 (MTFFSRFEAD…EVIQEIYPGI (87 aa)). The active-site Proton acceptor is Lys22. Thr25 (nucleophile) is an active-site residue. Catalysis depends on Glu75, which acts as the Proton donor.

The protein belongs to the N(4)-acetylcytidine amidohydrolase family.

It catalyses the reaction N(4)-acetylcytidine + H2O = cytidine + acetate + H(+). It carries out the reaction N(4)-acetyl-2'-deoxycytidine + H2O = 2'-deoxycytidine + acetate + H(+). The enzyme catalyses N(4)-acetylcytosine + H2O = cytosine + acetate + H(+). Catalyzes the hydrolysis of N(4)-acetylcytidine (ac4C). The protein is N(4)-acetylcytidine amidohydrolase of Vibrio vulnificus (strain YJ016).